Reading from the N-terminus, the 329-residue chain is Biotin synthase (329 aa).

One can recognise a Radical SAM core domain in the interval 38–262 (NTIQVSTLLS…IMPYSYIRLS (225 aa)). 3 residues coordinate [4Fe-4S] cluster: cysteine 53, cysteine 57, and cysteine 60. Cysteine 97, cysteine 128, cysteine 188, and arginine 260 together coordinate [2Fe-2S] cluster.

The protein belongs to the radical SAM superfamily. Biotin synthase family. In terms of assembly, homodimer. Requires [4Fe-4S] cluster as cofactor. [2Fe-2S] cluster serves as cofactor.

It catalyses the reaction (4R,5S)-dethiobiotin + (sulfur carrier)-SH + 2 reduced [2Fe-2S]-[ferredoxin] + 2 S-adenosyl-L-methionine = (sulfur carrier)-H + biotin + 2 5'-deoxyadenosine + 2 L-methionine + 2 oxidized [2Fe-2S]-[ferredoxin]. It functions in the pathway cofactor biosynthesis; biotin biosynthesis; biotin from 7,8-diaminononanoate: step 2/2. Catalyzes the conversion of dethiobiotin (DTB) to biotin by the insertion of a sulfur atom into dethiobiotin via a radical-based mechanism. This Acinetobacter baylyi (strain ATCC 33305 / BD413 / ADP1) protein is Biotin synthase.